A 112-amino-acid polypeptide reads, in one-letter code: UPF0212 protein Mhun_0078 (112 aa).

This sequence belongs to the UPF0212 family.

The polypeptide is UPF0212 protein Mhun_0078 (Methanospirillum hungatei JF-1 (strain ATCC 27890 / DSM 864 / NBRC 100397 / JF-1)).